Consider the following 54-residue polypeptide: Large ribosomal subunit protein bL33B (54 aa).

This sequence belongs to the bacterial ribosomal protein bL33 family.

The chain is Large ribosomal subunit protein bL33B from Mycobacterium sp. (strain JLS).